Consider the following 149-residue polypeptide: UPF0179 protein TON_1048 (149 aa).

Belongs to the UPF0179 family.

This chain is UPF0179 protein TON_1048, found in Thermococcus onnurineus (strain NA1).